Reading from the N-terminus, the 438-residue chain is UDP-N-acetylmuramoylalanine--D-glutamate ligase (438 aa).

An ATP-binding site is contributed by 112–118; that stretch reads GSNGKST.

This sequence belongs to the MurCDEF family.

It is found in the cytoplasm. The catalysed reaction is UDP-N-acetyl-alpha-D-muramoyl-L-alanine + D-glutamate + ATP = UDP-N-acetyl-alpha-D-muramoyl-L-alanyl-D-glutamate + ADP + phosphate + H(+). Its pathway is cell wall biogenesis; peptidoglycan biosynthesis. Cell wall formation. Catalyzes the addition of glutamate to the nucleotide precursor UDP-N-acetylmuramoyl-L-alanine (UMA). This is UDP-N-acetylmuramoylalanine--D-glutamate ligase from Escherichia coli O6:K15:H31 (strain 536 / UPEC).